The chain runs to 196 residues: Adenylate kinase (196 aa).

An ATP-binding site is contributed by 9-17 (GIPGVGKST).

This sequence belongs to the archaeal adenylate kinase family.

It is found in the cytoplasm. It catalyses the reaction AMP + ATP = 2 ADP. The protein is Adenylate kinase of Thermococcus kodakarensis (strain ATCC BAA-918 / JCM 12380 / KOD1) (Pyrococcus kodakaraensis (strain KOD1)).